Reading from the N-terminus, the 473-residue chain is Cysteine--tRNA ligase (473 aa).

Cys-30 serves as a coordination point for Zn(2+). Residues Met-32–His-42 carry the 'HIGH' region motif. Cys-213, His-238, and Glu-242 together coordinate Zn(2+). The 'KMSKS' region signature appears at Lys-270–Ser-274. Lys-273 is a binding site for ATP.

The protein belongs to the class-I aminoacyl-tRNA synthetase family. As to quaternary structure, monomer. The cofactor is Zn(2+).

Its subcellular location is the cytoplasm. The catalysed reaction is tRNA(Cys) + L-cysteine + ATP = L-cysteinyl-tRNA(Cys) + AMP + diphosphate. This is Cysteine--tRNA ligase from Acinetobacter baumannii (strain SDF).